Consider the following 352-residue polypeptide: Selenide, water dikinase (352 aa).

C21 is an active-site residue. Residues K24 and 51 to 53 each bind ATP; that span reads TND. Mg(2+) is bound at residue D54. ATP-binding positions include D71, D94, and 141–143; that span reads GHS. D94 provides a ligand contact to Mg(2+). D231 lines the Mg(2+) pocket.

The protein belongs to the selenophosphate synthase 1 family. Class I subfamily. Homodimer. Mg(2+) serves as cofactor.

The catalysed reaction is hydrogenselenide + ATP + H2O = selenophosphate + AMP + phosphate + 2 H(+). Synthesizes selenophosphate from selenide and ATP. This is Selenide, water dikinase from Myxococcus xanthus (strain DK1622).